The chain runs to 479 residues: Sucrose-6-phosphate hydrolase (479 aa).

Residues 44–47, Gln-63, 106–107, 166–167, and Glu-223 contribute to the substrate site; these read LLND, YS, and RD. Asp-47 is an active-site residue.

It belongs to the glycosyl hydrolase 32 family.

The protein resides in the cytoplasm. The catalysed reaction is Hydrolysis of terminal non-reducing beta-D-fructofuranoside residues in beta-D-fructofuranosides.. Its pathway is glycan biosynthesis; sucrose metabolism. This Streptococcus mutans serotype c (strain ATCC 700610 / UA159) protein is Sucrose-6-phosphate hydrolase (scrB).